We begin with the raw amino-acid sequence, 46 residues long: Large ribosomal subunit protein bL36 (46 aa).

This sequence belongs to the bacterial ribosomal protein bL36 family.

The chain is Large ribosomal subunit protein bL36 from Salmonella agona (strain SL483).